Reading from the N-terminus, the 583-residue chain is CD166 antigen (583 aa).

Positions 1–27 are cleaved as a signal peptide; it reads MASKGSPSCRLVFCLLISAAVLRPGLG. 2 Ig-like V-type domains span residues 28–120 and 125–234; these read WYTV…TEDN and PTLV…KTIY. Over 28–527 the chain is Extracellular; that stretch reads WYTVNSAYGD…NREKVNDQAK (500 aa). Disulfide bonds link cysteine 43–cysteine 113 and cysteine 157–cysteine 220. Residues asparagine 95, asparagine 167, asparagine 265, asparagine 306, asparagine 361, asparagine 457, asparagine 480, and asparagine 499 are each glycosylated (N-linked (GlcNAc...) asparagine). Ig-like C2-type domains lie at 245–328, 333–409, and 416–501; these read PTEQ…TTIT, DLSL…ESLT, and PQIK…LNVS. 3 cysteine pairs are disulfide-bonded: cysteine 270–cysteine 313, cysteine 354–cysteine 392, and cysteine 435–cysteine 485. The helical transmembrane segment at 528–549 threads the bilayer; it reads LIVGIVVGLLLAALVAGVVYWL. Residues 550–583 lie on the Cytoplasmic side of the membrane; that stretch reads YMKKSKTASKHVNKDLGNMEENKKLEENNHKTEA. Residues 562–583 form a disordered region; sequence NKDLGNMEENKKLEENNHKTEA. Residues 569–583 are compositionally biased toward basic and acidic residues; sequence EENKKLEENNHKTEA.

In terms of assembly, homodimer. Interacts (via extracellular domain) with CD6 (via extracellular domain). Homodimerization and interaction with CD6 involve the same region and cannot occur simultaneously. The affinity for CD6 is much higher than the affinity for self-association. Interacts (via glycosylated extracellular domain) with LGALS1 and LGALS3. Interaction with LGALS1 or LGALS3 inhibits interaction with CD6. Post-translationally, the N-terminus is blocked. Glycosylated. In terms of tissue distribution, strongest expression in the lung, then brain, liver, and kidney. Present in the somatosensory system, basal ganglia, cortex, olfactory system, and circumventricular organs.

The protein localises to the cell membrane. Its subcellular location is the cell projection. It is found in the axon. It localises to the dendrite. Its function is as follows. Cell adhesion molecule that mediates both heterotypic cell-cell contacts via its interaction with CD6, as well as homotypic cell-cell contacts. Promotes T-cell activation and proliferation via its interactions with CD6. Contributes to the formation and maturation of the immunological synapse via its interactions with CD6. Mediates homotypic interactions with cells that express ALCAM. Mediates attachment of dendritic cells onto endothelial cells via homotypic interaction. Inhibits endothelial cell migration and promotes endothelial tube formation via homotypic interactions. Required for normal organization of the lymph vessel network. Required for normal hematopoietic stem cell engraftment in the bone marrow. Plays a role in hematopoiesis; required for normal numbers of hematopoietic stem cells in bone marrow. Promotes in vitro osteoblast proliferation and differentiation. Promotes neurite extension, axon growth and axon guidance; axons grow preferentially on surfaces that contain ALCAM. Mediates outgrowth and pathfinding for retinal ganglion cell axons. This chain is CD166 antigen (Alcam), found in Rattus norvegicus (Rat).